Consider the following 500-residue polypeptide: Lysine--tRNA ligase (500 aa).

Positions 410 and 417 each coordinate Mg(2+).

This sequence belongs to the class-II aminoacyl-tRNA synthetase family. Homodimer. It depends on Mg(2+) as a cofactor.

The protein resides in the cytoplasm. It catalyses the reaction tRNA(Lys) + L-lysine + ATP = L-lysyl-tRNA(Lys) + AMP + diphosphate. This Pseudomonas putida (strain W619) protein is Lysine--tRNA ligase.